The following is a 279-amino-acid chain: Protein ABIL4 (279 aa).

Disordered stretches follow at residues 192-211 (VHNNINNRTPNKRSNSPMRF) and 219-241 (LLKRSSSPSQPKKPPLALPEPQR). The span at 194 to 208 (NNINNRTPNKRSNSP) shows a compositional bias: polar residues. Residues 219-228 (LLKRSSSPSQ) show a composition bias toward low complexity.

It belongs to the ABI family. In terms of assembly, binds SCAR.

It localises to the cytoplasm. It is found in the cytoskeleton. Involved in regulation of actin and microtubule organization. Part of a WAVE complex that activates the Arp2/3 complex. This Arabidopsis thaliana (Mouse-ear cress) protein is Protein ABIL4 (ABIL4).